Consider the following 291-residue polypeptide: HTH-type transcriptional activator AmpR (291 aa).

The HTH lysR-type domain maps to 6–63 (IPLNSLRAFEAAARHLSFTRAAIELNVTHSAISQHVKSLEQQLNCQLFVRGSRGLMLT). Positions 23-42 (FTRAAIELNVTHSAISQHVK) form a DNA-binding region, H-T-H motif.

The protein belongs to the LysR transcriptional regulatory family.

The protein localises to the cytoplasm. Its function is as follows. Regulates the expression of the beta-lactamase gene. Represses cephalosporinase (AmpC) in the presence of beta-lactams and induces it in the absence of them. The polypeptide is HTH-type transcriptional activator AmpR (ampR) (Citrobacter freundii).